The chain runs to 92 residues: Phospholemman (92 aa).

The signal sequence occupies residues Met1–Ala20. Residues Ala22–Ser35 are Extracellular-facing. The helical transmembrane segment at Leu36–Leu56 threads the bilayer. The Cytoplasmic portion of the chain corresponds to Lys57 to Arg92. A disordered region spans residues Ala67–Arg92. Residue Thr79 is modified to Phosphothreonine. Ser82 is subject to Phosphoserine. The residue at position 83 (Ser83) is a Phosphoserine; by PKA and PKC. The span at Ser83–Arg92 shows a compositional bias: basic residues. Ser88 bears the Phosphoserine; by PKA mark. Thr89 carries the phosphothreonine; by PKC modification.

Belongs to the FXYD family. In terms of assembly, homotetramer. Monomer. Regulatory subunit of the sodium/potassium-transporting ATPase (NKA) which is composed of a catalytic alpha subunit, a non-catalytic beta subunit and an additional regulatory subunit. The monomeric form associates with NKA while the oligomeric form does not. Interacts with the catalytic alpha-1 subunit ATP1A1. Also interacts with the catalytic alpha-2 and alpha-3 subunits ATP1A2 and ATP1A3. Very little interaction with ATP1A1, ATP1A2 or ATP1A3 when phosphorylated at Ser-83. Interacts with the non-catalytic beta-1 subunit ATP1B1. Oxidative stress decreases interaction with ATP1A1 but increases interaction with ATP1B1. Major plasma membrane substrate for cAMP-dependent protein kinase (PKA) and protein kinase C (PKC) in several different tissues. Phosphorylated in response to insulin and adrenergic stimulation. Phosphorylation at Ser-88 stimulates sodium/potassium-transporting ATPase activity while the unphosphorylated form inhibits sodium/potassium-transporting ATPase activity. Phosphorylation increases tetramerization, decreases binding to ATP1A1 and reduces inhibition of ATP1A1 activity. Phosphorylation at Ser-83 leads to greatly reduced interaction with ATP1A1, ATP1A2 and ATP1A3. May be phosphorylated by DMPK. In terms of processing, palmitoylation increases half-life and stability and is enhanced upon phosphorylation at Ser-88 by PKA. Post-translationally, glutathionylated. Expressed in ventricular myocytes (at protein level).

The protein localises to the cell membrane. It is found in the sarcolemma. Its subcellular location is the apical cell membrane. It localises to the membrane. The protein resides in the caveola. The protein localises to the T-tubule. In terms of biological role, associates with and regulates the activity of the sodium/potassium-transporting ATPase (NKA) which transports Na(+) out of the cell and K(+) into the cell. Inhibits NKA activity in its unphosphorylated state and stimulates activity when phosphorylated. Reduces glutathionylation of the NKA beta-1 subunit ATP1B1, thus reversing glutathionylation-mediated inhibition of ATP1B1. Contributes to female sexual development by maintaining the excitability of neurons which secrete gonadotropin-releasing hormone. The polypeptide is Phospholemman (Oryctolagus cuniculus (Rabbit)).